A 73-amino-acid polypeptide reads, in one-letter code: UPF0154 protein LGAS_0795 (73 aa).

The chain crosses the membrane as a helical span at residues 3 to 23; sequence LGLAIFLIIIALLIGLVGGFY.

Belongs to the UPF0154 family.

The protein resides in the cell membrane. This chain is UPF0154 protein LGAS_0795, found in Lactobacillus gasseri (strain ATCC 33323 / DSM 20243 / BCRC 14619 / CIP 102991 / JCM 1131 / KCTC 3163 / NCIMB 11718 / NCTC 13722 / AM63).